Consider the following 441-residue polypeptide: POC1 centriolar protein homolog A (441 aa).

WD repeat units follow at residues 16–55 (GHRD…RAYR), 58–97 (GHKD…ESTA), 100–139 (AHTG…FLFS), 142–181 (QHIN…CIQS), 184–223 (EHGG…LIQH), 226–265 (VHSG…LLYT), and 268–307 (GHQG…GSYP). Positions 347-376 (DLEPHITEMSVKDRSSPLSYTSRSVDQHHP) are disordered. Positions 348 to 361 (LEPHITEMSVKDRS) are enriched in basic and acidic residues. Positions 400–427 (LTRTVGILEQRLSLTEDKLKECIEQQQA) form a coiled coil.

This sequence belongs to the WD repeat POC1 family. As to quaternary structure, interacts with pat.

It is found in the cytoplasm. The protein resides in the cytoskeleton. May play an important role in centriole assembly and/or stability and ciliogenesis. The polypeptide is POC1 centriolar protein homolog A (poc1a) (Xenopus laevis (African clawed frog)).